Consider the following 124-residue polypeptide: Small ribosomal subunit protein uS11 (124 aa).

This sequence belongs to the universal ribosomal protein uS11 family. Part of the 30S ribosomal subunit.

Its function is as follows. Located on the platform of the 30S subunit. The protein is Small ribosomal subunit protein uS11 of Methanococcus aeolicus (strain ATCC BAA-1280 / DSM 17508 / OCM 812 / Nankai-3).